The following is a 428-amino-acid chain: Cyclic AMP-responsive element-binding protein 3-like protein 4 (428 aa).

The interval 1–68 is required for transcriptional activation; it reads MLLGSLFEQT…EFLQMMINPN (68 aa). At 1-294 the chain is on the cytoplasmic side; sequence MLLGSLFEQT…QTSNKAAQTS (294 aa). Residues 71 to 111 form a disordered region; the sequence is YSTGPAAAESPESDSGFSDDPRPDTPPQSETSPPLPQPTPV. The bZIP domain maps to 216–279; sequence ILKKVRRKIR…ISLITQLRKL (64 aa). The segment at 218 to 247 is basic motif; sequence KKVRRKIRNKQSAQDSRRRKKEYIDGLESR. Residues 258-279 form a leucine-zipper region; that stretch reads LHKKVVELEKHNISLITQLRKL. A helical; Signal-anchor for type II membrane protein transmembrane segment spans residues 295–315; the sequence is TCVLILLFSLALLVFPSYSPF. The Lumenal segment spans residues 316 to 428; sequence RSRPSASQED…LSKTARADEM (113 aa). Residues 339-428 are disordered; that stretch reads NKGGFSEVAD…LSKTARADEM (90 aa). The segment covering 354-368 has biased composition (basic and acidic residues); the sequence is TLHRAQQREEGDPGR. N418 carries N-linked (GlcNAc...) asparagine glycosylation.

This sequence belongs to the bZIP family. ATF subfamily. Binds DNA as a dimer. Controlled by regulated intramembrane proteolysis (RIP). A fragment containing the cytoplasmic transcription factor domain is released by proteolysis. The cleavage seems to be performed sequentially by site-1 and site-2 proteases (PS1 and PS2).

Its subcellular location is the endoplasmic reticulum membrane. It is found in the nucleus. Functionally, transcriptional activator. This chain is Cyclic AMP-responsive element-binding protein 3-like protein 4 (creb3l4), found in Xenopus tropicalis (Western clawed frog).